Here is a 734-residue protein sequence, read N- to C-terminus: Platelet glycoprotein Ib alpha chain (734 aa).

Positions 1–16 (MALLILLFLLPSPLHS) are cleaved as a signal peptide. One can recognise an LRRNT domain in the interval 17 to 47 (QHTCSISKVTSLLEVNCENKKLTALPADLPA). At 17–612 (QHTCSISKVT…LNSDFCCFLP (596 aa)) the chain is on the extracellular side. An intrachain disulfide couples Cys-20 to Cys-33. 7 LRR repeats span residues 48–69 (DTGI…SLVH), 72–93 (HLTY…GKLI), 94–115 (KLEN…GWAL), 117–140 (ALTT…DGLS), 141–162 (QLQE…LLLP), 165–188 (KLKK…DGLE), and 189–210 (DLDT…FFGT). An LRRCT domain is found at 221 to 282 (NSWYCDCEIL…YSYPGKGCPT (62 aa)). 2 disulfides stabilise this stretch: Cys-225–Cys-264 and Cys-227–Cys-280. Position 292 is a sulfotyrosine (Tyr-292). O-linked (GalNAc...) threonine glycosylation is found at Thr-301, Thr-311, Thr-315, and Thr-316. Ser-335 carries O-linked (GalNAc...) serine glycosylation. O-linked (GalNAc...) threonine glycosylation is found at Thr-339, Thr-348, Thr-358, and Thr-377. A glycan (O-linked (GalNAc...) serine) is linked at Ser-382. 3 O-linked (GalNAc...) threonine glycosylation sites follow: Thr-384, Thr-385, and Thr-405. Disordered regions lie at residues 406-429 (STLT…TPEH) and 460-526 (EPST…PEPS). Residues Thr-512, Thr-516, Thr-519, Thr-530, Thr-542, Thr-546, Thr-550, and Thr-562 are each glycosylated (O-linked (GalNAc...) threonine). The O-linked (GalNAc...) serine glycan is linked to Ser-572. O-linked (GalNAc...) threonine glycosylation occurs at Thr-573. A helical transmembrane segment spans residues 613–633 (LGFYVLGLLWLLFASVVLILL). At 634–734 (LTWTWHVTPH…VGIRYSGHSL (101 aa)) the chain is on the cytoplasmic side. Phosphoserine occurs at positions 711 and 714.

In terms of assembly, two GP-Ib beta are disulfide-linked to one GP-Ib alpha. GP-IX is complexed with the GP-Ib heterodimer via a non covalent linkage. Interacts with FLNB. Interacts with FLNA (via filamin repeats 4, 9, 12, 17, 19, 21, and 23). O-glycosylated. In terms of processing, glycocalicin is the product of a proteolytic cleavage/shedding, catalyzed by ADAM17, which releases most of the extracellular domain. Binding sites for vWF and thrombin are in this part of the protein.

It is found in the membrane. Functionally, GP-Ib, a surface membrane protein of platelets, participates in the formation of platelet plugs by binding to the A1 domain of vWF, which is already bound to the subendothelium. In Mus musculus (Mouse), this protein is Platelet glycoprotein Ib alpha chain (Gp1ba).